Consider the following 236-residue polypeptide: Glucosamine-6-phosphate deaminase (236 aa).

Residue D62 is the Proton acceptor; for enolization step of the active site. N128 functions as the For ring-opening step in the catalytic mechanism. Residue H130 is the Proton acceptor; for ring-opening step of the active site. Catalysis depends on E135, which acts as the For ring-opening step.

It belongs to the glucosamine/galactosamine-6-phosphate isomerase family. NagB subfamily.

It carries out the reaction alpha-D-glucosamine 6-phosphate + H2O = beta-D-fructose 6-phosphate + NH4(+). It functions in the pathway amino-sugar metabolism; N-acetylneuraminate degradation; D-fructose 6-phosphate from N-acetylneuraminate: step 5/5. In terms of biological role, catalyzes the reversible isomerization-deamination of glucosamine 6-phosphate (GlcN6P) to form fructose 6-phosphate (Fru6P) and ammonium ion. This is Glucosamine-6-phosphate deaminase from Oenococcus oeni (strain ATCC BAA-331 / PSU-1).